The primary structure comprises 522 residues: O-fucosyltransferase 38 (522 aa).

Residues 26–46 (AISLYLIFVFAFTIWVLVFSS) form a helical; Signal-anchor for type II membrane protein membrane-spanning segment. Residues 54–67 (DHTKHQQQHHRDLI) are compositionally biased toward basic and acidic residues. Residues 54–73 (DHTKHQQQHHRDLIDSESFP) are disordered. Asn-147 carries N-linked (GlcNAc...) asparagine glycosylation. Position 284-286 (284-286 (HLR)) interacts with substrate. An N-linked (GlcNAc...) asparagine glycan is attached at Asn-325. Positions 475–496 (HKDRQGAPRRRKGPTQGIKGRA) are disordered.

The protein belongs to the glycosyltransferase GT106 family.

The protein resides in the membrane. It participates in glycan metabolism. In Arabidopsis thaliana (Mouse-ear cress), this protein is O-fucosyltransferase 38.